A 190-amino-acid polypeptide reads, in one-letter code: Orotate phosphoribosyltransferase (190 aa).

Position 114–122 (Glu-114–Ser-122) interacts with 5-phospho-alpha-D-ribose 1-diphosphate. Orotate is bound by residues Thr-118 and Arg-146.

Belongs to the purine/pyrimidine phosphoribosyltransferase family. PyrE subfamily. Homodimer. Requires Mg(2+) as cofactor.

It catalyses the reaction orotidine 5'-phosphate + diphosphate = orotate + 5-phospho-alpha-D-ribose 1-diphosphate. The protein operates within pyrimidine metabolism; UMP biosynthesis via de novo pathway; UMP from orotate: step 1/2. Catalyzes the transfer of a ribosyl phosphate group from 5-phosphoribose 1-diphosphate to orotate, leading to the formation of orotidine monophosphate (OMP). In Thermoanaerobacter sp. (strain X514), this protein is Orotate phosphoribosyltransferase.